Here is a 389-residue protein sequence, read N- to C-terminus: S-adenosylmethionine synthase 2 (389 aa).

Histidine 17 is an ATP binding site. Aspartate 19 is a Mg(2+) binding site. Position 45 (glutamate 45) interacts with K(+). 2 residues coordinate L-methionine: glutamate 58 and glutamine 102. Residues 102-112 (QSADIAVGVDA) are flexible loop. ATP contacts are provided by residues 166–168 (DSK), 231–232 (RF), aspartate 240, 246–247 (RK), alanine 263, and lysine 267. Aspartate 240 provides a ligand contact to L-methionine. Lysine 271 contributes to the L-methionine binding site.

Belongs to the AdoMet synthase family. As to quaternary structure, homotetramer; dimer of dimers. Mg(2+) is required as a cofactor. The cofactor is K(+).

The protein resides in the cytoplasm. It carries out the reaction L-methionine + ATP + H2O = S-adenosyl-L-methionine + phosphate + diphosphate. The protein operates within amino-acid biosynthesis; S-adenosyl-L-methionine biosynthesis; S-adenosyl-L-methionine from L-methionine: step 1/1. Catalyzes the formation of S-adenosylmethionine (AdoMet) from methionine and ATP. The overall synthetic reaction is composed of two sequential steps, AdoMet formation and the subsequent tripolyphosphate hydrolysis which occurs prior to release of AdoMet from the enzyme. The polypeptide is S-adenosylmethionine synthase 2 (Rhodospirillum rubrum (strain ATCC 11170 / ATH 1.1.1 / DSM 467 / LMG 4362 / NCIMB 8255 / S1)).